Consider the following 375-residue polypeptide: Aminomethyltransferase (375 aa).

This sequence belongs to the GcvT family. As to quaternary structure, the glycine cleavage system is composed of four proteins: P, T, L and H.

The enzyme catalyses N(6)-[(R)-S(8)-aminomethyldihydrolipoyl]-L-lysyl-[protein] + (6S)-5,6,7,8-tetrahydrofolate = N(6)-[(R)-dihydrolipoyl]-L-lysyl-[protein] + (6R)-5,10-methylene-5,6,7,8-tetrahydrofolate + NH4(+). Functionally, the glycine cleavage system catalyzes the degradation of glycine. The protein is Aminomethyltransferase of Cupriavidus necator (strain ATCC 17699 / DSM 428 / KCTC 22496 / NCIMB 10442 / H16 / Stanier 337) (Ralstonia eutropha).